The primary structure comprises 387 residues: Transmembrane protein 120 homolog (387 aa).

The stretch at 1 to 39 (MNIDSLKNEWEELNKEFAELESCNRRYIELLEQLHSHQQ) forms a coiled coil. N-linked (GlcNAc...) asparagine glycosylation occurs at Asn-111. A run of 6 helical transmembrane segments spans residues 130–150 (FKLI…IFNY), 155–175 (LAFI…ESIL), 191–211 (FIST…HWQI), 216–238 (FMYF…KGLL), 264–284 (GLSF…YNAW), and 302–322 (VMSG…LWVV). Residues 346 to 387 (RKEMKNSASDLDLSSGSKLSPTATTTTSIATATQTPAEKKET) are disordered. Phosphoserine is present on residues Ser-352, Ser-354, and Ser-365. Low complexity predominate over residues 352–381 (SASDLDLSSGSKLSPTATTTTSIATATQTP).

Belongs to the TMEM120 family.

Its subcellular location is the membrane. This chain is Transmembrane protein 120 homolog, found in Drosophila melanogaster (Fruit fly).